The chain runs to 116 residues: MIHGIGVDLIEISRIKNLYKRQSKLVDRILTINEQHKFNQFNNEQRKMEFLAGRFATKEAFSKALGSGLGKTVSFTDIDCVNDEDGKPCIHYEGYKVHVSISHTEHYAMSQVILEV.

2 residues coordinate Mg(2+): aspartate 8 and glutamate 59.

It belongs to the P-Pant transferase superfamily. AcpS family. Requires Mg(2+) as cofactor.

The protein localises to the cytoplasm. It catalyses the reaction apo-[ACP] + CoA = holo-[ACP] + adenosine 3',5'-bisphosphate + H(+). Transfers the 4'-phosphopantetheine moiety from coenzyme A to a Ser of acyl-carrier-protein. The polypeptide is Holo-[acyl-carrier-protein] synthase (Staphylococcus saprophyticus subsp. saprophyticus (strain ATCC 15305 / DSM 20229 / NCIMB 8711 / NCTC 7292 / S-41)).